The following is a 376-amino-acid chain: S-adenosylmethionine synthase (376 aa).

Position 14 (H14) interacts with ATP. D16 is a binding site for Mg(2+). E42 is a K(+) binding site. Positions 55 and 98 each coordinate L-methionine. A flexible loop region spans residues Q98–S108. ATP is bound by residues D158–K160, R224–F225, D233, R239–K240, A256, and K260. L-methionine is bound at residue D233. K264 provides a ligand contact to L-methionine.

The protein belongs to the AdoMet synthase family. Homotetramer; dimer of dimers. It depends on Mg(2+) as a cofactor. K(+) is required as a cofactor.

The protein resides in the cytoplasm. The catalysed reaction is L-methionine + ATP + H2O = S-adenosyl-L-methionine + phosphate + diphosphate. It functions in the pathway amino-acid biosynthesis; S-adenosyl-L-methionine biosynthesis; S-adenosyl-L-methionine from L-methionine: step 1/1. Its function is as follows. Catalyzes the formation of S-adenosylmethionine (AdoMet) from methionine and ATP. The overall synthetic reaction is composed of two sequential steps, AdoMet formation and the subsequent tripolyphosphate hydrolysis which occurs prior to release of AdoMet from the enzyme. This chain is S-adenosylmethionine synthase, found in Aquifex aeolicus (strain VF5).